The sequence spans 579 residues: MEVRGGVGQGSAARHPPAPEPSRAAARVQAGDALPLPIRHTNLIFSALFAASLAYLMRRWREKIRSSTPLHAVGLAEMLAIFGLVASLIYLLSFFGIAFVQSIVSSGDDDEDFLVGSGSSGSAAAPSRQHAQAPAPCELLGSPAAAPEKMPEDDEEIVASVVAGKVPSYALEARLGDCRRAAGIRREALRRITGRDIEGLPLDGFDYASILGQCCELPVGYVQLPVGVAGPLLLDGRRFYLPMATTEGCLVASTNRGCKAIAESGGATSVVLRDAMTRAPVARFPTARRAAELKAFLEDPANFDTLSVVFNRSSRFARLQGVQCAMAGRNLYMRFSCSTGDAMGMNMVSKGVQNVLDFLQDDFHDMDVISISGNFCSDKKPSAVNWIEGRGKSVVCEAVIGEEVVKKVLKTDVQSLVELNTIKNLAGSAVAGALGGFNAHASNIVTAIFIATGQDPAQNVESSHCITMLEPVNAGRDLHISVTMPSIEVGTVGGGTQLASQSACLDLLGVRGASRDRPGSNARLLATVVAGGVLAGELSLLSALAAGQLVKSHMKYNRSSKDVSSTTATEKTRQREVDV.

The tract at residues 1-22 (MEVRGGVGQGSAARHPPAPEPS) is disordered. 2 consecutive transmembrane segments (helical) span residues 36 to 56 (LPIR…LAYL) and 80 to 100 (AIFG…IAFV). Residues 101-153 (QSIVSSGDDDEDFLVGSGSSGSAAAPSRQHAQAPAPCELLGSPAAAPEKMPED) are linker. Residues 154–579 (DEEIVASVVA…EKTRQREVDV (426 aa)) are catalytic. The active-site Charge relay system is the Glu247. Residue Asn311 is glycosylated (N-linked (GlcNAc...) asparagine). Residues Lys379 and Asp455 each act as charge relay system in the active site. The helical transmembrane segment at 524-544 (LLATVVAGGVLAGELSLLSAL) threads the bilayer. The active-site Proton donor is His553. The disordered stretch occupies residues 555 to 579 (KYNRSSKDVSSTTATEKTRQREVDV). A glycan (N-linked (GlcNAc...) asparagine) is linked at Asn557. Positions 570–579 (EKTRQREVDV) are enriched in basic and acidic residues.

Belongs to the HMG-CoA reductase family.

The protein localises to the endoplasmic reticulum membrane. It carries out the reaction (R)-mevalonate + 2 NADP(+) + CoA = (3S)-3-hydroxy-3-methylglutaryl-CoA + 2 NADPH + 2 H(+). It participates in metabolic intermediate biosynthesis; (R)-mevalonate biosynthesis; (R)-mevalonate from acetyl-CoA: step 3/3. Functionally, catalyzes the synthesis of mevalonate. The specific precursor of all isoprenoid compounds present in plants. This Zea mays (Maize) protein is 3-hydroxy-3-methylglutaryl-coenzyme A reductase (HMGR).